The following is a 307-amino-acid chain: Taste receptor type 2 member 10 (307 aa).

Over 1 to 6 (MLRVVE) the chain is Extracellular. A helical membrane pass occupies residues 7 to 27 (GIFIFVVISESVFGVLGNGFI). Over 28-42 (GLVNCIDCAKNKLST) the chain is Cytoplasmic. Residues 43–63 (IGFILTGLAISRIFLIWIIIT) traverse the membrane as a helical segment. The Extracellular segment spans residues 64–100 (DGFIQIFSPNIYASSNLIEYISYFWVIGNQSSMWFAT). A helical transmembrane segment spans residues 101–121 (SLSIFYFLKIANFSNYIFLWL). The Cytoplasmic segment spans residues 122-126 (KSRTN). The helical transmembrane segment at 127–147 (MVLPFMIVFLLISSLLNFAYI) threads the bilayer. The Extracellular portion of the chain corresponds to 148-179 (AKILNDYKMKNDTVWDLNMYKSEYFIKQILLN). An N-linked (GlcNAc...) asparagine glycan is attached at N158. A helical membrane pass occupies residues 180–200 (LGVIFFFTLSLITCVLLIISL). At 201 to 227 (WRHNRQMQSNVTGLRDSNTEAHVKAMK) the chain is on the cytoplasmic side. A helical membrane pass occupies residues 228-248 (VLISFIILFILYFIGMAIEIS). Topologically, residues 249 to 257 (YFTVRENKL) are extracellular. Residues 258–278 (LLMFGMTTTAIYPWGHSFILI) traverse the membrane as a helical segment. The Cytoplasmic portion of the chain corresponds to 279–307 (LGNSKLKQASLRVLQQLKCCEKRKNLRVT).

It belongs to the G-protein coupled receptor T2R family.

The protein localises to the membrane. Receptor that may play a role in the perception of bitterness and is gustducin-linked. May play a role in sensing the chemical composition of the gastrointestinal content. The activity of this receptor may stimulate alpha gustducin, mediate PLC-beta-2 activation and lead to the gating of TRPM5. The chain is Taste receptor type 2 member 10 (TAS2R10) from Pan paniscus (Pygmy chimpanzee).